A 338-amino-acid chain; its full sequence is 2,3-dihydroxybenzoate decarboxylase (338 aa).

Residue Cys-251 is part of the active site.

The protein belongs to the metallo-dependent hydrolases superfamily. As to quaternary structure, homotetramer.

It carries out the reaction 2,3-dihydroxybenzoate + H(+) = catechol + CO2. Its pathway is aromatic compound metabolism; benzoate degradation via hydroxylation. Its function is as follows. Has an absolute substrate specificity for 2,3-DHBA. The protein is 2,3-dihydroxybenzoate decarboxylase of Aspergillus oryzae (strain ATCC 42149 / RIB 40) (Yellow koji mold).